A 147-amino-acid chain; its full sequence is Lysozyme C (147 aa).

The first 18 residues, 1–18 (MRSLLVLVLCFLPLAALG), serve as a signal peptide directing secretion. Residues 19–147 (KVYGRCELAA…VNAWIRGCRL (129 aa)) enclose the C-type lysozyme domain. 4 disulfide bridges follow: Cys-24–Cys-145, Cys-48–Cys-133, Cys-82–Cys-98, and Cys-94–Cys-112. Residues Glu-53 and Asp-70 contribute to the active site.

It belongs to the glycosyl hydrolase 22 family. In terms of assembly, monomer.

It is found in the secreted. The catalysed reaction is Hydrolysis of (1-&gt;4)-beta-linkages between N-acetylmuramic acid and N-acetyl-D-glucosamine residues in a peptidoglycan and between N-acetyl-D-glucosamine residues in chitodextrins.. Its function is as follows. Lysozymes have primarily a bacteriolytic function; those in tissues and body fluids are associated with the monocyte-macrophage system and enhance the activity of immunoagents. This chain is Lysozyme C (LYZ), found in Coturnix japonica (Japanese quail).